Consider the following 262-residue polypeptide: tRNA (guanine-N(1)-)-methyltransferase (262 aa).

S-adenosyl-L-methionine is bound by residues G113 and 137 to 142 (IGDYVL).

Belongs to the RNA methyltransferase TrmD family. In terms of assembly, homodimer.

It is found in the cytoplasm. It catalyses the reaction guanosine(37) in tRNA + S-adenosyl-L-methionine = N(1)-methylguanosine(37) in tRNA + S-adenosyl-L-homocysteine + H(+). Its function is as follows. Specifically methylates guanosine-37 in various tRNAs. This is tRNA (guanine-N(1)-)-methyltransferase from Saccharopolyspora erythraea (strain ATCC 11635 / DSM 40517 / JCM 4748 / NBRC 13426 / NCIMB 8594 / NRRL 2338).